We begin with the raw amino-acid sequence, 444 residues long: Phosphoglucosamine mutase (444 aa).

Ser-102 (phosphoserine intermediate) is an active-site residue. Residues Ser-102, Asp-241, Asp-243, and Asp-245 each contribute to the Mg(2+) site. Ser-102 bears the Phosphoserine mark.

The protein belongs to the phosphohexose mutase family. It depends on Mg(2+) as a cofactor. Post-translationally, activated by phosphorylation.

The catalysed reaction is alpha-D-glucosamine 1-phosphate = D-glucosamine 6-phosphate. Its function is as follows. Catalyzes the conversion of glucosamine-6-phosphate to glucosamine-1-phosphate. The protein is Phosphoglucosamine mutase of Actinobacillus pleuropneumoniae serotype 5b (strain L20).